Here is a 468-residue protein sequence, read N- to C-terminus: MATGADVRDILELGGPEGDAASGTISKKDIINPDKKKSKKSSETLTFKRPEGMHREVYALLYSDKKDAPPLLPSDTGQGYRTVKAKLGSKKVRPWKWMPFTNPARKDGAMFFHWRRAAEEGKDYPFARFNKTVQVPVYSEQEYQLYLHDDAWTKAETDHLFDLSRRFDLRFVVIHDRYDHQQFKKRSVEDLKERYYHICAKLANVRAVPGTDLKIPVFDAGHERRRKEQLERLYNRTPEQVAEEEYLLQELRKIEARKKEREKRSQDLQKLITAADTTAEQRRTERKAPKKKLPQKKEAEKPAVPETAGIKFPDFKSAGVTLRSQRMKLPSSVGQKKIKALEQMLLELGVELSPTPTEELVHMFNELRSDLVLLYELKQACANCEYELQMLRHRHEALARAGVLGAPAAAAVGPTPASAEPTVSESGLGLDPTKDTIIDVVGAPLTPNSRKRRESASSSSSVKKAKKP.

Composition is skewed to basic and acidic residues over residues 1–11 and 26–48; these read MATGADVRDIL and SKKD…LTFK. Positions 1–48 are disordered; it reads MATGADVRDILELGGPEGDAASGTISKKDIINPDKKKSKKSSETLTFK. K27 is covalently cross-linked (Glycyl lysine isopeptide (Lys-Gly) (interchain with G-Cter in SUMO2)). Residues 149 to 199 form the SANT domain; that stretch reads DDAWTKAETDHLFDLSRRFDLRFVVIHDRYDHQQFKKRSVEDLKERYYHIC. K214 is covalently cross-linked (Glycyl lysine isopeptide (Lys-Gly) (interchain with G-Cter in SUMO2)). Positions 225 to 275 form a coiled coil; that stretch reads RRKEQLERLYNRTPEQVAEEEYLLQELRKIEARKKEREKRSQDLQKLITAA. A compositionally biased stretch (basic and acidic residues) spans 258–267; sequence KKEREKRSQD. 2 disordered regions span residues 258–305 and 411–468; these read KKER…PAVP and AVGP…AKKP. Phosphothreonine is present on T446. S449 carries the post-translational modification Phosphoserine.

Component of the NuA4 histone acetyltransferase complex which contains the catalytic subunit KAT5/TIP60 and the subunits EP400, TRRAP/PAF400, BRD8/SMAP, EPC1, DMAP1/DNMAP1, RUVBL1/TIP49, RUVBL2, ING3, actin, ACTL6A/BAF53A, MORF4L1/MRG15, MORF4L2/MRGX, MRGBP, YEATS4/GAS41, VPS72/YL1 and MEAF6. Component of a NuA4-related complex which contains EP400, TRRAP/PAF400, SRCAP, BRD8/SMAP, EPC1, DMAP1/DNMAP1, RUVBL1/TIP49, RUVBL2, actin, ACTL6A/BAF53A, VPS72 and YEATS4/GAS41. DMAP1 also forms a complex with DNMT1 and HDAC2. Throughout S phase it interacts directly with the N-terminus of DNMT1, which serves to recruit DMAP1 to replication foci. DMAP1 interacts with ING1, a component of the mSIN3A transcription repressor complex, although this interaction is not required for recruitment of ING1 to heterochromatin. Interacts directly with the transcriptional corepressor TSG101. Interacts with URI1. Interacts with the pro-apoptotic protein DAXX.

It is found in the nucleus. Its subcellular location is the cytoplasm. Its function is as follows. Involved in transcription repression and activation. Its interaction with HDAC2 may provide a mechanism for histone deacetylation in heterochromatin following replication of DNA at late firing origins. Can also repress transcription independently of histone deacetylase activity. May specifically potentiate DAXX-mediated repression of glucocorticoid receptor-dependent transcription. Component of the NuA4 histone acetyltransferase (HAT) complex which is involved in transcriptional activation of select genes principally by acetylation of nucleosomal histones H4 and H2A. This modification may both alter nucleosome - DNA interactions and promote interaction of the modified histones with other proteins which positively regulate transcription. This complex may be required for the activation of transcriptional programs associated with oncogene and proto-oncogene mediated growth induction, tumor suppressor mediated growth arrest and replicative senescence, apoptosis, and DNA repair. NuA4 may also play a direct role in DNA repair when recruited to sites of DNA damage. Participates in the nuclear localization of URI1 and increases its transcriptional corepressor activity. The polypeptide is DNA methyltransferase 1-associated protein 1 (Dmap1) (Mus musculus (Mouse)).